We begin with the raw amino-acid sequence, 209 residues long: Outer-membrane lipoprotein carrier protein (209 aa).

The N-terminal stretch at 1-21 is a signal peptide; that stretch reads MHRQLRYAVLATALFASTAFA.

The protein belongs to the LolA family. As to quaternary structure, monomer.

Its subcellular location is the periplasm. In terms of biological role, participates in the translocation of lipoproteins from the inner membrane to the outer membrane. Only forms a complex with a lipoprotein if the residue after the N-terminal Cys is not an aspartate (The Asp acts as a targeting signal to indicate that the lipoprotein should stay in the inner membrane). This is Outer-membrane lipoprotein carrier protein from Xanthomonas axonopodis pv. citri (strain 306).